The following is a 308-amino-acid chain: Apolipoprotein E (308 aa).

An N-terminal signal peptide occupies residues 1-18; sequence MKFLWAALVVTLLAGCQA. 8 tandem repeats follow at residues 75–96, 97–118, 119–140, 141–162, 163–184, 185–206, 207–224, and 225–246. Positions 75–246 are 8 X 22 AA approximate tandem repeats; sequence LLIEETMKEV…RLDDVRDQME (172 aa). Residues 153 to 163 are LDL and other lipoprotein receptors binding; it reads HLRKLRKRLLR. Residue 157–160 participates in heparin binding; that stretch reads LRKR. Positions 205 to 281 are lipid-binding and lipoprotein association; that stretch reads AIPPSQQLRE…SWFEPLVQDM (77 aa). 220-227 provides a ligand contact to heparin; the sequence is GQKVRGRL. Positions 257–308 are homooligomerization; the sequence is SQVRLQAEAFQTRLKSWFEPLVQDMQRQWASLVEKVQSSLGISPSTKPSKTK. Residues 269–281 form a specificity for association with VLDL region; sequence RLKSWFEPLVQDM.

This sequence belongs to the apolipoprotein A1/A4/E family. Homotetramer. May interact with ABCA1; functionally associated with ABCA1 in the biogenesis of HDLs. May interact with APP/A4 amyloid-beta peptide; the interaction is extremely stable in vitro but its physiological significance is unclear. May interact with MAPT. May interact with MAP2. In the cerebrospinal fluid, interacts with secreted SORL1. Interacts with PMEL; this allows the loading of PMEL luminal fragment on ILVs to induce fibril nucleation. In terms of processing, APOE exists as multiple glycosylated and sialylated glycoforms within cells and in plasma. The extent of glycosylation and sialylation are tissue and context specific. Glycated in plasma VLDL. Post-translationally, phosphorylated by FAM20C in the extracellular medium.

It localises to the secreted. The protein resides in the extracellular space. Its subcellular location is the extracellular matrix. It is found in the extracellular vesicle. The protein localises to the endosome. It localises to the multivesicular body. APOE is an apolipoprotein, a protein associating with lipid particles, that mainly functions in lipoprotein-mediated lipid transport between organs via the plasma and interstitial fluids. APOE is a core component of plasma lipoproteins and is involved in their production, conversion and clearance. Apolipoproteins are amphipathic molecules that interact both with lipids of the lipoprotein particle core and the aqueous environment of the plasma. As such, APOE associates with chylomicrons, chylomicron remnants, very low density lipoproteins (VLDL) and intermediate density lipoproteins (IDL) but shows a preferential binding to high-density lipoproteins (HDL). It also binds a wide range of cellular receptors including the LDL receptor/LDLR and the very low-density lipoprotein receptor/VLDLR that mediate the cellular uptake of the APOE-containing lipoprotein particles. Finally, APOE also has a heparin-binding activity and binds heparan-sulfate proteoglycans on the surface of cells, a property that supports the capture and the receptor-mediated uptake of APOE-containing lipoproteins by cells. The polypeptide is Apolipoprotein E (APOE) (Pteropus alecto (Black flying fox)).